Consider the following 328-residue polypeptide: Interferon regulatory factor 1 (328 aa).

The segment at residues 5–113 (RMRMRPWLEM…SAVRVYRMLP (109 aa)) is a DNA-binding region (IRF tryptophan pentad repeat). At K78 the chain carries N6-acetyllysine. The disordered stretch occupies residues 92 to 164 (EEVKDQSRNK…STLPDDHSSY (73 aa)). The span at 141 to 157 (GDSSPDTLSDGLSSSTL) shows a compositional bias: low complexity. Residues K276 and K300 each participate in a glycyl lysine isopeptide (Lys-Gly) (interchain with G-Cter in SUMO) cross-link.

This sequence belongs to the IRF family. As to quaternary structure, monomer. Homodimer. Interacts with EP300. Interacts with MYD88. Interacts with PIAS3. Interacts with SPOP. In terms of processing, phosphorylated by CK2 and this positively regulates its activity. Post-translationally, sumoylation represses the transcriptional activity and displays enhanced resistance to protein degradation. Sumoylated by UBE2I/UBC9 and SUMO1. Inactivates the tumor suppressor activity. Elevated levels in tumor cells. Major site is Lys-276. Sumoylation is enhanced by PIAS3. Desumoylated by SENP1 in tumor cells and appears to compete with ubiquitination on C-terminal sites. Ubiquitinated in a SPOP-depedent manner. Appears to compete with sumoylation on C-terminal sites.

Its subcellular location is the nucleus. The protein resides in the cytoplasm. With respect to regulation, activated by MYD88. Functionally, transcriptional regulator which displays a remarkable functional diversity in the regulation of cellular responses. Regulates transcription of IFN and IFN-inducible genes, host response to viral and bacterial infections, regulation of many genes expressed during hematopoiesis, inflammation, immune responses and cell proliferation and differentiation, regulation of the cell cycle and induction of growth arrest and programmed cell death following DNA damage. Stimulates both innate and acquired immune responses through the activation of specific target genes and can act as a transcriptional activator and repressor regulating target genes by binding to an interferon-stimulated response element (ISRE) in their promoters. Has an essentail role in IFNG-dependent immunity to mycobacteria. Binds to a consensus sequence in gene promoters. Its target genes for transcriptional activation activity include: genes involved in anti-viral response, such as IFN-alpha/beta, RIGI, TNFSF10/TRAIL, ZBP1, OAS1/2, PIAS1/GBP, EIF2AK2/PKR and RSAD2/viperin; antibacterial response, such as GBP2, GBP5 and NOS2/INOS; anti-proliferative response, such as p53/TP53, LOX and CDKN1A; apoptosis, such as BBC3/PUMA, CASP1, CASP7 and CASP8; immune response, such as IL7, IL12A/B and IL15, PTGS2/COX2 and CYBB; DNA damage responses and DNA repair, such as POLQ/POLH; MHC class I expression, such as TAP1, PSMB9/LMP2, PSME1/PA28A, PSME2/PA28B and B2M and MHC class II expression, such as CIITA; metabolic enzymes, such as ACOD1/IRG1. Represses genes involved in anti-proliferative response, such as BIRC5/survivin, CCNB1, CCNE1, CDK1, CDK2 and CDK4 and in immune response, such as FOXP3, IL4, ANXA2 and TLR4. Stimulates p53/TP53-dependent transcription through enhanced recruitment of EP300 leading to increased acetylation of p53/TP53. Plays an important role in immune response directly affecting NK maturation and activity, macrophage production of IL12, Th1 development and maturation of CD8+ T-cells. Also implicated in the differentiation and maturation of dendritic cells and in the suppression of regulatory T (Treg) cells development. Acts as a tumor suppressor and plays a role not only in antagonism of tumor cell growth but also in stimulating an immune response against tumor cells. This chain is Interferon regulatory factor 1 (Irf1), found in Rattus norvegicus (Rat).